A 122-amino-acid polypeptide reads, in one-letter code: LYR motif-containing protein 1 (122 aa).

This sequence belongs to the complex I LYR family.

The sequence is that of LYR motif-containing protein 1 (lyrm1) from Xenopus laevis (African clawed frog).